We begin with the raw amino-acid sequence, 329 residues long: Sulfate/thiosulfate import ATP-binding protein CysA (329 aa).

Positions 3 to 237 constitute an ABC transporter domain; that stretch reads IEVRNVSKRF…PANDFVYHFL (235 aa). 35 to 42 is an ATP binding site; it reads GPSGCGKT.

It belongs to the ABC transporter superfamily. Sulfate/tungstate importer (TC 3.A.1.6) family. In terms of assembly, the complex is composed of two ATP-binding proteins (CysA), two transmembrane proteins (CysT and CysW) and a solute-binding protein (CysP).

The protein resides in the cell inner membrane. It carries out the reaction sulfate(out) + ATP + H2O = sulfate(in) + ADP + phosphate + H(+). The catalysed reaction is thiosulfate(out) + ATP + H2O = thiosulfate(in) + ADP + phosphate + H(+). In terms of biological role, part of the ABC transporter complex CysAWTP involved in sulfate/thiosulfate import. Responsible for energy coupling to the transport system. This Pseudomonas putida (strain ATCC 47054 / DSM 6125 / CFBP 8728 / NCIMB 11950 / KT2440) protein is Sulfate/thiosulfate import ATP-binding protein CysA.